The chain runs to 234 residues: MFRNNYDGDTVTFSPTGRLFQVEYALEAIKQGSVTVGLRSNTHAVLVALKRNADELSSYQKKIIKCDEHMGLSLAGLAPDARVLSNYLRQQCNYSSLVFNRKLAVERAGHLLCDKAQKNTQSYGGRPYGVGLLIIGYDKSGAHLLEFQPSGNVTELYGTAIGARSQGAKTYLERTLDTFIKIDGNPDELIKAGVEAISQSLRDESLTVDNLSIAIVGKDTPFTIYDGEAVAKYI.

Phosphoserine is present on Ser14. Residue Lys191 forms a Glycyl lysine isopeptide (Lys-Gly) (interchain with G-Cter in ubiquitin) linkage.

This sequence belongs to the peptidase T1A family. As to quaternary structure, the 26S proteasome consists of a 20S proteasome core and two 19S regulatory subunits. The 20S proteasome core is composed of 28 subunits that are arranged in four stacked rings, resulting in a barrel-shaped structure. The two end rings are each formed by seven alpha subunits, and the two central rings are each formed by seven beta subunits. The catalytic chamber with the active sites is on the inside of the barrel.

The protein resides in the cytoplasm. Its subcellular location is the nucleus. The proteasome degrades poly-ubiquitinated proteins in the cytoplasm and in the nucleus. It is essential for the regulated turnover of proteins and for the removal of misfolded proteins. The proteasome is a multicatalytic proteinase complex that is characterized by its ability to cleave peptides with Arg, Phe, Tyr, Leu, and Glu adjacent to the leaving group at neutral or slightly basic pH. It has an ATP-dependent proteolytic activity. The sequence is that of Proteasome subunit alpha type-6 (PRE5) from Saccharomyces cerevisiae (strain ATCC 204508 / S288c) (Baker's yeast).